An 839-amino-acid polypeptide reads, in one-letter code: LPS-assembly protein LptD (839 aa).

The first 21 residues, 1-21, serve as a signal peptide directing secretion; it reads MAIGITACVLSLINYQGLAYS.

The protein belongs to the LptD family. Component of the lipopolysaccharide transport and assembly complex. Interacts with LptE and LptA.

The protein resides in the cell outer membrane. Its function is as follows. Together with LptE, is involved in the assembly of lipopolysaccharide (LPS) at the surface of the outer membrane. The chain is LPS-assembly protein LptD from Legionella pneumophila subsp. pneumophila (strain Philadelphia 1 / ATCC 33152 / DSM 7513).